A 556-amino-acid chain; its full sequence is Small ribosomal subunit protein bS1 (556 aa).

6 S1 motif domains span residues 35–105, 120–183, 204–272, 289–359, 377–444, and 461–525; these read TIKE…ISQQ, NAII…ISRK, TEPV…LSIK, GYAI…VSLK, DVLE…LSAK, and DSVI…ASVH.

This sequence belongs to the bacterial ribosomal protein bS1 family.

Binds mRNA; thus facilitating recognition of the initiation point. It is needed to translate mRNA with a short Shine-Dalgarno (SD) purine-rich sequence. The polypeptide is Small ribosomal subunit protein bS1 (rpsA) (Helicobacter pylori (strain ATCC 700392 / 26695) (Campylobacter pylori)).